A 151-amino-acid polypeptide reads, in one-letter code: Superoxide dismutase [Cu-Zn] 2 (151 aa).

3 residues coordinate Cu cation: histidine 44, histidine 46, and histidine 61. Residues cysteine 55 and cysteine 144 are joined by a disulfide bond. The Zn(2+) site is built by histidine 61, histidine 69, histidine 78, and aspartate 81. Histidine 118 lines the Cu cation pocket.

The protein belongs to the Cu-Zn superoxide dismutase family. Homodimer. Cu cation serves as cofactor. Zn(2+) is required as a cofactor.

The protein localises to the cytoplasm. It catalyses the reaction 2 superoxide + 2 H(+) = H2O2 + O2. Functionally, destroys radicals which are normally produced within the cells and which are toxic to biological systems. The protein is Superoxide dismutase [Cu-Zn] 2 (SODCC.1) of Zea mays (Maize).